The following is a 274-amino-acid chain: Bis(5'-nucleosyl)-tetraphosphatase, symmetrical (274 aa).

Belongs to the Ap4A hydrolase family.

It catalyses the reaction P(1),P(4)-bis(5'-adenosyl) tetraphosphate + H2O = 2 ADP + 2 H(+). Its function is as follows. Hydrolyzes diadenosine 5',5'''-P1,P4-tetraphosphate to yield ADP. This is Bis(5'-nucleosyl)-tetraphosphatase, symmetrical from Erwinia tasmaniensis (strain DSM 17950 / CFBP 7177 / CIP 109463 / NCPPB 4357 / Et1/99).